A 476-amino-acid polypeptide reads, in one-letter code: Aspartyl/glutamyl-tRNA(Asn/Gln) amidotransferase subunit B (476 aa).

Belongs to the GatB/GatE family. GatB subfamily. In terms of assembly, heterotrimer of A, B and C subunits.

It carries out the reaction L-glutamyl-tRNA(Gln) + L-glutamine + ATP + H2O = L-glutaminyl-tRNA(Gln) + L-glutamate + ADP + phosphate + H(+). The catalysed reaction is L-aspartyl-tRNA(Asn) + L-glutamine + ATP + H2O = L-asparaginyl-tRNA(Asn) + L-glutamate + ADP + phosphate + 2 H(+). Its function is as follows. Allows the formation of correctly charged Asn-tRNA(Asn) or Gln-tRNA(Gln) through the transamidation of misacylated Asp-tRNA(Asn) or Glu-tRNA(Gln) in organisms which lack either or both of asparaginyl-tRNA or glutaminyl-tRNA synthetases. The reaction takes place in the presence of glutamine and ATP through an activated phospho-Asp-tRNA(Asn) or phospho-Glu-tRNA(Gln). The polypeptide is Aspartyl/glutamyl-tRNA(Asn/Gln) amidotransferase subunit B (Clostridium botulinum (strain Kyoto / Type A2)).